The following is a 1396-amino-acid chain: DNA-directed RNA polymerase subunit beta' (1396 aa).

The Zn(2+) site is built by Cys-71, Cys-73, Cys-86, and Cys-89. Residues Asp-462, Asp-464, and Asp-466 each coordinate Mg(2+). 4 residues coordinate Zn(2+): Cys-810, Cys-884, Cys-891, and Cys-894. Positions 1372-1382 are enriched in basic and acidic residues; it reads DEQLAQQREDA. Positions 1372–1396 are disordered; that stretch reads DEQLAQQREDAMEPLPAEIALSDAE.

It belongs to the RNA polymerase beta' chain family. As to quaternary structure, the RNAP catalytic core consists of 2 alpha, 1 beta, 1 beta' and 1 omega subunit. When a sigma factor is associated with the core the holoenzyme is formed, which can initiate transcription. It depends on Mg(2+) as a cofactor. Zn(2+) is required as a cofactor.

The enzyme catalyses RNA(n) + a ribonucleoside 5'-triphosphate = RNA(n+1) + diphosphate. Functionally, DNA-dependent RNA polymerase catalyzes the transcription of DNA into RNA using the four ribonucleoside triphosphates as substrates. This Caulobacter vibrioides (strain ATCC 19089 / CIP 103742 / CB 15) (Caulobacter crescentus) protein is DNA-directed RNA polymerase subunit beta'.